The sequence spans 275 residues: Tryptophan synthase alpha chain (275 aa).

Catalysis depends on proton acceptor residues E49 and D60.

The protein belongs to the TrpA family. As to quaternary structure, tetramer of two alpha and two beta chains.

It catalyses the reaction (1S,2R)-1-C-(indol-3-yl)glycerol 3-phosphate + L-serine = D-glyceraldehyde 3-phosphate + L-tryptophan + H2O. The protein operates within amino-acid biosynthesis; L-tryptophan biosynthesis; L-tryptophan from chorismate: step 5/5. Its function is as follows. The alpha subunit is responsible for the aldol cleavage of indoleglycerol phosphate to indole and glyceraldehyde 3-phosphate. The chain is Tryptophan synthase alpha chain from Nitrosomonas europaea (strain ATCC 19718 / CIP 103999 / KCTC 2705 / NBRC 14298).